The chain runs to 404 residues: Cysteine desulfurase IscS (404 aa).

Residues 75–76 (AT), N155, Q183, and 203–205 (SAH) each bind pyridoxal 5'-phosphate. K206 bears the N6-(pyridoxal phosphate)lysine mark. T243 lines the pyridoxal 5'-phosphate pocket. The active-site Cysteine persulfide intermediate is C328. Residue C328 participates in [2Fe-2S] cluster binding.

Belongs to the class-V pyridoxal-phosphate-dependent aminotransferase family. NifS/IscS subfamily. Homodimer. Forms a heterotetramer with IscU, interacts with other sulfur acceptors. The cofactor is pyridoxal 5'-phosphate.

The protein localises to the cytoplasm. The catalysed reaction is (sulfur carrier)-H + L-cysteine = (sulfur carrier)-SH + L-alanine. It participates in cofactor biosynthesis; iron-sulfur cluster biosynthesis. Functionally, master enzyme that delivers sulfur to a number of partners involved in Fe-S cluster assembly, tRNA modification or cofactor biosynthesis. Catalyzes the removal of elemental sulfur atoms from cysteine to produce alanine. Functions as a sulfur delivery protein for Fe-S cluster synthesis onto IscU, an Fe-S scaffold assembly protein, as well as other S acceptor proteins. The chain is Cysteine desulfurase IscS from Vibrio vulnificus (strain CMCP6).